A 637-amino-acid chain; its full sequence is DNA damage-binding protein CMR1 (637 aa).

Disordered regions lie at residues 1-91 (MIES…EEEA) and 144-168 (LVDT…TERR). 2 stretches are compositionally biased toward basic and acidic residues: residues 8 to 23 (EQER…RLMK) and 74 to 91 (AGHE…EEEA). WD repeat units follow at residues 185 to 226 (VTPK…FASN), 255 to 295 (HARS…SEEI), 297 to 321 (AGEE…VYMD), 361 to 401 (VCEK…SVVK), and 431 to 470 (KARQ…LFSE). 2 disordered regions span residues 482-508 (SNKP…LSWL) and 525-549 (KQEQ…PTRI). WD repeat units follow at residues 556–598 (GKWL…LRSL) and 602–637 (NLVT…SPDP).

The protein belongs to the WD repeat DDB2/WDR76 family.

Functionally, DNA-binding protein that binds to both single- and double-stranded DNA. Binds preferentially to UV-damaged DNA. May be involved in DNA-metabolic processes. The polypeptide is DNA damage-binding protein CMR1 (Mycosarcoma maydis (Corn smut fungus)).